The chain runs to 193 residues: Superoxide dismutase [Fe] (193 aa).

Positions 27, 74, 157, and 161 each coordinate Fe cation.

This sequence belongs to the iron/manganese superoxide dismutase family. As to quaternary structure, homodimer. It depends on Fe cation as a cofactor.

It carries out the reaction 2 superoxide + 2 H(+) = H2O2 + O2. Destroys superoxide anion radicals which are normally produced within the cells and which are toxic to biological systems. The polypeptide is Superoxide dismutase [Fe] (sodB) (Salmonella typhimurium (strain LT2 / SGSC1412 / ATCC 700720)).